We begin with the raw amino-acid sequence, 368 residues long: Large ribosomal subunit protein mL46 (368 aa).

A disordered region spans residues 53–81; the sequence is TATATTTTTLPPPHPPVTTSTGTHAATST. Low complexity predominate over residues 69–81; it reads VTTSTGTHAATST.

The protein belongs to the mitochondrion-specific ribosomal protein mL46 family. As to quaternary structure, component of the mitochondrial large ribosomal subunit (mt-LSU). Mature N.crassa 74S mitochondrial ribosomes consist of a small (37S) and a large (54S) subunit. The 37S small subunit contains a 16S ribosomal RNA (16S mt-rRNA) and 32 different proteins. The 54S large subunit contains a 23S rRNA (23S mt-rRNA) and 42 different proteins.

The protein localises to the mitochondrion. In terms of biological role, component of the mitochondrial ribosome (mitoribosome), a dedicated translation machinery responsible for the synthesis of mitochondrial genome-encoded proteins, including at least some of the essential transmembrane subunits of the mitochondrial respiratory chain. The mitoribosomes are attached to the mitochondrial inner membrane and translation products are cotranslationally integrated into the membrane. This is Large ribosomal subunit protein mL46 (mrpl17) from Neurospora crassa (strain ATCC 24698 / 74-OR23-1A / CBS 708.71 / DSM 1257 / FGSC 987).